The sequence spans 444 residues: 3-phosphoshikimate 1-carboxyvinyltransferase (444 aa).

3-phosphoshikimate contacts are provided by lysine 29, serine 30, and arginine 34. Lysine 29 provides a ligand contact to phosphoenolpyruvate. The phosphoenolpyruvate site is built by glycine 103 and arginine 132. 3-phosphoshikimate is bound by residues serine 177, glutamine 179, aspartate 329, and lysine 356. Glutamine 179 lines the phosphoenolpyruvate pocket. The Proton acceptor role is filled by aspartate 329. 2 residues coordinate phosphoenolpyruvate: arginine 360 and arginine 402.

The protein belongs to the EPSP synthase family. As to quaternary structure, monomer.

It localises to the cytoplasm. The enzyme catalyses 3-phosphoshikimate + phosphoenolpyruvate = 5-O-(1-carboxyvinyl)-3-phosphoshikimate + phosphate. Its pathway is metabolic intermediate biosynthesis; chorismate biosynthesis; chorismate from D-erythrose 4-phosphate and phosphoenolpyruvate: step 6/7. Catalyzes the transfer of the enolpyruvyl moiety of phosphoenolpyruvate (PEP) to the 5-hydroxyl of shikimate-3-phosphate (S3P) to produce enolpyruvyl shikimate-3-phosphate and inorganic phosphate. In Prochlorococcus marinus (strain NATL2A), this protein is 3-phosphoshikimate 1-carboxyvinyltransferase.